We begin with the raw amino-acid sequence, 358 residues long: NADH-quinone oxidoreductase subunit H (358 aa).

8 helical membrane passes run 20–40, 95–115, 128–148, 168–188, 206–226, 253–273, 290–310, and 334–354; these read ITVG…IPLI, ALFY…WAVI, IGLL…IIAG, ISYE…SGSM, VFSW…ISAV, GFAF…ISAL, WGFI…AVLY, and VLIP…ISPL.

The protein belongs to the complex I subunit 1 family. As to quaternary structure, NDH-1 is composed of 14 different subunits. Subunits NuoA, H, J, K, L, M, N constitute the membrane sector of the complex.

It is found in the cell inner membrane. It catalyses the reaction a quinone + NADH + 5 H(+)(in) = a quinol + NAD(+) + 4 H(+)(out). In terms of biological role, NDH-1 shuttles electrons from NADH, via FMN and iron-sulfur (Fe-S) centers, to quinones in the respiratory chain. The immediate electron acceptor for the enzyme in this species is believed to be ubiquinone. Couples the redox reaction to proton translocation (for every two electrons transferred, four hydrogen ions are translocated across the cytoplasmic membrane), and thus conserves the redox energy in a proton gradient. This subunit may bind ubiquinone. This Neisseria meningitidis serogroup C (strain 053442) protein is NADH-quinone oxidoreductase subunit H.